A 147-amino-acid chain; its full sequence is Large ribosomal subunit protein uL13 (147 aa).

Belongs to the universal ribosomal protein uL13 family. As to quaternary structure, part of the 50S ribosomal subunit.

Its function is as follows. This protein is one of the early assembly proteins of the 50S ribosomal subunit, although it is not seen to bind rRNA by itself. It is important during the early stages of 50S assembly. The sequence is that of Large ribosomal subunit protein uL13 from Mycobacteroides abscessus (strain ATCC 19977 / DSM 44196 / CCUG 20993 / CIP 104536 / JCM 13569 / NCTC 13031 / TMC 1543 / L948) (Mycobacterium abscessus).